The primary structure comprises 119 residues: MPRVKRSVTARARHKKVLKLAKGYRGRRKNIYRIAKQAVMKAGQYAYRDRRQRKRQFRALWIARINAAVRELGMTYSTFMNGLKKSGIGLDRKVLADLAVFDKAAFEKITNQVKTSLAN.

This sequence belongs to the bacterial ribosomal protein bL20 family.

Functionally, binds directly to 23S ribosomal RNA and is necessary for the in vitro assembly process of the 50S ribosomal subunit. It is not involved in the protein synthesizing functions of that subunit. The chain is Large ribosomal subunit protein bL20 from Nitrosomonas eutropha (strain DSM 101675 / C91 / Nm57).